The sequence spans 236 residues: Elastase-1 (236 aa).

Positions 1 to 236 (VVGGRVAQPN…AYISWMNGIM (236 aa)) constitute a Peptidase S1 domain. Residues C30 and C46 are joined by a disulfide bond. The active-site Charge relay system is H45. Ca(2+) is bound by residues E59, N61, T64, E66, and E69. Residue D93 is the Charge relay system of the active site. 3 disulfide bridges follow: C127–C193, C158–C174, and C183–C213. S187 acts as the Charge relay system in catalysis.

It belongs to the peptidase S1 family. Elastase subfamily. Ca(2+) serves as cofactor. As to expression, pancreas.

It is found in the secreted. It catalyses the reaction Hydrolysis of proteins, including elastin. Preferential cleavage: Ala-|-Xaa.. Functionally, acts upon elastin. This chain is Elastase-1, found in Salmo salar (Atlantic salmon).